We begin with the raw amino-acid sequence, 721 residues long: Translation initiation factor eIF2B subunit epsilon (721 aa).

The tract at residues 1 to 40 (MATTVVAPPGAVSDRANKRGGGPGGGGGGGGARGAEEESP) is disordered. A2 carries the N-acetylalanine modification. R19 is subject to Omega-N-methylarginine. A compositionally biased stretch (gly residues) spans 19 to 33 (RGGGPGGGGGGGGAR). Glycyl lysine isopeptide (Lys-Gly) (interchain with G-Cter in ubiquitin) cross-links involve residues K61 and K103. At S130 the chain carries Phosphoserine. Residues K141 and K217 each participate in a glycyl lysine isopeptide (Lys-Gly) (interchain with G-Cter in ubiquitin) cross-link. Residue T322 is modified to Phosphothreonine. Disordered regions lie at residues 446–478 (GSVI…KEKA) and 517–545 (LTIN…AGSP). S450 bears the Phosphoserine mark. The span at 456 to 465 (AEEDEDDGQF) shows a compositional bias: acidic residues. 4 positions are modified to phosphoserine: S466, S469, S532, and S540. Basic and acidic residues predominate over residues 528-540 (ESERSMDSEELDS). In terms of domain architecture, W2 spans 543–720 (GSPQLDDIKV…KEAEEESSED (178 aa)). At S544 the chain carries Phosphoserine; by DYRK2. A Phosphoserine modification is found at S717.

Belongs to the eIF-2B gamma/epsilon subunits family. As to quaternary structure, component of the translation initiation factor 2B (eIF2B) complex which is a heterodecamer of two sets of five different subunits: alpha, beta, gamma, delta and epsilon. Subunits alpha, beta and delta comprise a regulatory subcomplex and subunits epsilon and gamma comprise a catalytic subcomplex. Within the complex, the hexameric regulatory complex resides at the center, with the two heterodimeric catalytic subcomplexes bound on opposite sides. Post-translationally, phosphorylated at Ser-544 by DYRK2; this is required for subsequent phosphorylation by GSK3B. Phosphorylated on serine and threonine residues by GSK3B; phosphorylation inhibits its function. Polyubiquitinated, probably by NEDD4. Ubiquitously expressed.

The protein localises to the cytoplasm. It localises to the cytosol. With respect to regulation, activated by the chemical integrated stress response (ISR) inhibitor ISRIB which stimulates guanine nucleotide exchange factor activity for both phosphorylated and unphosphorylated eIF2. Functionally, acts as a component of the translation initiation factor 2B (eIF2B) complex, which catalyzes the exchange of GDP for GTP on eukaryotic initiation factor 2 (eIF2) gamma subunit. Its guanine nucleotide exchange factor activity is repressed when bound to eIF2 complex phosphorylated on the alpha subunit, thereby limiting the amount of methionyl-initiator methionine tRNA available to the ribosome and consequently global translation is repressed. This Oryctolagus cuniculus (Rabbit) protein is Translation initiation factor eIF2B subunit epsilon (EIF2B5).